Here is a 315-residue protein sequence, read N- to C-terminus: Protein-L-isoaspartate O-methyltransferase (315 aa).

2 disordered regions span residues 1–47 and 59–89; these read MSGE…KPAA and RALP…AAPK. The span at 14 to 34 shows a compositional bias: basic and acidic residues; sequence EDLKRAPRKSEVRSGSGERHA. Low complexity-rich tracts occupy residues 35–47 and 59–81; these read ASAV…KPAA and RALP…LKPA. Ser162 is an active-site residue.

It belongs to the methyltransferase superfamily. L-isoaspartyl/D-aspartyl protein methyltransferase family.

The protein localises to the cytoplasm. It carries out the reaction [protein]-L-isoaspartate + S-adenosyl-L-methionine = [protein]-L-isoaspartate alpha-methyl ester + S-adenosyl-L-homocysteine. Its function is as follows. Catalyzes the methyl esterification of L-isoaspartyl residues in peptides and proteins that result from spontaneous decomposition of normal L-aspartyl and L-asparaginyl residues. It plays a role in the repair and/or degradation of damaged proteins. This is Protein-L-isoaspartate O-methyltransferase from Burkholderia ambifaria (strain MC40-6).